A 452-amino-acid chain; its full sequence is Bifunctional F420 biosynthesis protein FbiB (452 aa).

A coenzyme F420:L-glutamate ligase region spans residues 1 to 248 (MVSAPGDHAG…AGEEDLFWLG (248 aa)). GTP contacts are provided by residues 24–27 (LPEF), Ser54, and Lys59. Asp113 is an a divalent metal cation binding site. Asn116 is a binding site for GTP. Residues Asp154 and Thr155 each coordinate a divalent metal cation. Residues 249–452 (TAEAVERGRR…RDPGDGLVER (204 aa)) form a dehydro-coenzyme F420-0 reductase region. FMN-binding positions include 264–268 (RRSVR) and Ala292. Asp324 serves as a coordination point for coenzyme F420-(gamma-Glu)n. Residues Gly403 and Arg440 each contribute to the FMN site.

The protein in the N-terminal section; belongs to the CofE family. It depends on Mg(2+) as a cofactor. Requires Mn(2+) as cofactor. K(+) is required as a cofactor.

It catalyses the reaction oxidized coenzyme F420-0 + GTP + L-glutamate = oxidized coenzyme F420-1 + GDP + phosphate + H(+). The enzyme catalyses oxidized coenzyme F420-0 + FMN + H(+) = dehydro coenzyme F420-0 + FMNH2. The catalysed reaction is oxidized coenzyme F420-1 + GTP + L-glutamate = oxidized coenzyme F420-2 + GDP + phosphate + H(+). It participates in cofactor biosynthesis; coenzyme F420 biosynthesis. Bifunctional enzyme that catalyzes the GTP-dependent successive addition of two or more gamma-linked L-glutamates to the L-lactyl phosphodiester of 7,8-didemethyl-8-hydroxy-5-deazariboflavin (F420-0) to form polyglutamated F420 derivatives, and the FMNH2-dependent reduction of dehydro-F420-0 to form F420-0. In Nocardia farcinica (strain IFM 10152), this protein is Bifunctional F420 biosynthesis protein FbiB.